Consider the following 369-residue polypeptide: Anhydro-N-acetylmuramic acid kinase (369 aa).

12–19 (GTSLDGVD) lines the ATP pocket.

This sequence belongs to the anhydro-N-acetylmuramic acid kinase family.

The enzyme catalyses 1,6-anhydro-N-acetyl-beta-muramate + ATP + H2O = N-acetyl-D-muramate 6-phosphate + ADP + H(+). It participates in amino-sugar metabolism; 1,6-anhydro-N-acetylmuramate degradation. Its pathway is cell wall biogenesis; peptidoglycan recycling. Its function is as follows. Catalyzes the specific phosphorylation of 1,6-anhydro-N-acetylmuramic acid (anhMurNAc) with the simultaneous cleavage of the 1,6-anhydro ring, generating MurNAc-6-P. Is required for the utilization of anhMurNAc either imported from the medium or derived from its own cell wall murein, and thus plays a role in cell wall recycling. This Actinobacillus pleuropneumoniae serotype 5b (strain L20) protein is Anhydro-N-acetylmuramic acid kinase.